Here is a 325-residue protein sequence, read N- to C-terminus: Methionyl-tRNA formyltransferase (325 aa).

S113–P116 provides a ligand contact to (6S)-5,6,7,8-tetrahydrofolate.

The protein belongs to the Fmt family.

The catalysed reaction is L-methionyl-tRNA(fMet) + (6R)-10-formyltetrahydrofolate = N-formyl-L-methionyl-tRNA(fMet) + (6S)-5,6,7,8-tetrahydrofolate + H(+). Its function is as follows. Attaches a formyl group to the free amino group of methionyl-tRNA(fMet). The formyl group appears to play a dual role in the initiator identity of N-formylmethionyl-tRNA by promoting its recognition by IF2 and preventing the misappropriation of this tRNA by the elongation apparatus. The sequence is that of Methionyl-tRNA formyltransferase from Chromohalobacter salexigens (strain ATCC BAA-138 / DSM 3043 / CIP 106854 / NCIMB 13768 / 1H11).